A 372-amino-acid polypeptide reads, in one-letter code: Tyrosine--tRNA ligase (372 aa).

L-tyrosine-binding residues include Tyr37, Tyr169, Gln173, Asp176, and Gln191. A 'KMSKS' region motif is present at residues 246 to 250; the sequence is KMSKS. Lys249 is a binding site for ATP.

The protein belongs to the class-I aminoacyl-tRNA synthetase family. TyrS type 4 subfamily. Homodimer.

The protein localises to the cytoplasm. It catalyses the reaction tRNA(Tyr) + L-tyrosine + ATP = L-tyrosyl-tRNA(Tyr) + AMP + diphosphate + H(+). Its function is as follows. Catalyzes the attachment of tyrosine to tRNA(Tyr) in a two-step reaction: tyrosine is first activated by ATP to form Tyr-AMP and then transferred to the acceptor end of tRNA(Tyr). The protein is Tyrosine--tRNA ligase of Pyrobaculum arsenaticum (strain DSM 13514 / JCM 11321 / PZ6).